The primary structure comprises 329 residues: tRNA dimethylallyltransferase (329 aa).

Residue 12–19 (GPTSVGKT) coordinates ATP. A substrate-binding site is contributed by 14–19 (TSVGKT). The tract at residues 37-40 (DSRY) is interaction with substrate tRNA. Positions 306 to 329 (LREESDEGDVAVHQSGGGKEAPRA) are disordered. Positions 320 to 329 (SGGGKEAPRA) are enriched in gly residues.

It belongs to the IPP transferase family. In terms of assembly, monomer. Mg(2+) serves as cofactor.

The catalysed reaction is adenosine(37) in tRNA + dimethylallyl diphosphate = N(6)-dimethylallyladenosine(37) in tRNA + diphosphate. In terms of biological role, catalyzes the transfer of a dimethylallyl group onto the adenine at position 37 in tRNAs that read codons beginning with uridine, leading to the formation of N6-(dimethylallyl)adenosine (i(6)A). The chain is tRNA dimethylallyltransferase from Thermomicrobium roseum (strain ATCC 27502 / DSM 5159 / P-2).